A 392-amino-acid polypeptide reads, in one-letter code: O-phospho-L-seryl-tRNA:Cys-tRNA synthase (392 aa).

Pyridoxal 5'-phosphate is bound by residues 84 to 85, Asn-191, and 214 to 216; these read AR and SGH. Lys-217 carries the N6-(pyridoxal phosphate)lysine modification.

The protein belongs to the SepCysS family. As to quaternary structure, homodimer. Interacts with SepRS. It depends on pyridoxal 5'-phosphate as a cofactor.

It carries out the reaction O-phospho-L-seryl-tRNA(Cys) + hydrogen sulfide + H(+) = L-cysteinyl-tRNA(Cys) + phosphate. Functionally, converts O-phospho-L-seryl-tRNA(Cys) (Sep-tRNA(Cys)) to L-cysteinyl-tRNA(Cys) (Cys-tRNA(Cys)). The chain is O-phospho-L-seryl-tRNA:Cys-tRNA synthase from Methanopyrus kandleri (strain AV19 / DSM 6324 / JCM 9639 / NBRC 100938).